Consider the following 83-residue polypeptide: Conotoxin VnMKLT1-022 (83 aa).

A signal peptide spans 1-22 (MKLMCMMIVAVLFLTAWTFVTA). The propeptide occupies 23-55 (DDSINGPENRRIWEKLLSKTRDEMKNPEASKLN). 3 disulfide bridges follow: Cys-59-Cys-74, Cys-66-Cys-78, and Cys-73-Cys-82.

It belongs to the conotoxin O1 superfamily. Expressed by the venom duct.

It localises to the secreted. This chain is Conotoxin VnMKLT1-022, found in Conus ventricosus (Mediterranean cone).